We begin with the raw amino-acid sequence, 62 residues long: MTIIFQFALISLVLVSFVLVVGVPVAYATPQSWVESKKLLWLGSGVWIALVLLVGLLNFFVV.

2 helical membrane passes run 8-28 (ALIS…VAYA) and 41-61 (WLGS…NFFV).

This sequence belongs to the PsbZ family. As to quaternary structure, PSII is composed of 1 copy each of membrane proteins PsbA, PsbB, PsbC, PsbD, PsbE, PsbF, PsbH, PsbI, PsbJ, PsbK, PsbL, PsbM, PsbT, PsbX, PsbY, PsbZ, Psb30/Ycf12, peripheral proteins PsbO, CyanoQ (PsbQ), PsbU, PsbV and a large number of cofactors. It forms dimeric complexes.

It is found in the cellular thylakoid membrane. Its function is as follows. May control the interaction of photosystem II (PSII) cores with the light-harvesting antenna, regulates electron flow through the 2 photosystem reaction centers. PSII is a light-driven water plastoquinone oxidoreductase, using light energy to abstract electrons from H(2)O, generating a proton gradient subsequently used for ATP formation. This chain is Photosystem II reaction center protein Z, found in Trichormus variabilis (strain ATCC 29413 / PCC 7937) (Anabaena variabilis).